The following is a 318-amino-acid chain: NADH-ubiquinone oxidoreductase chain 1 (318 aa).

The next 8 helical transmembrane spans lie at 2–22 (FTINLLLLITPALIAMAFLTL), 70–90 (LYMAAPTLALTIALLLWTPLP), 98–118 (FNLGLLFVLATSSLAVYSILW), 140–160 (ISYGVTLAIILLSTLLMSGSF), 173–193 (WLLLPSWPLTMMWFISTLAET), 217–237 (AGSFALFFMAEYMNIIMMNAL), 253–273 (ELYTMNFMTKTLLLTILFLWI), and 294–314 (LPLTLALCMWYISMPMLLSGI).

It belongs to the complex I subunit 1 family.

The protein resides in the mitochondrion inner membrane. It catalyses the reaction a ubiquinone + NADH + 5 H(+)(in) = a ubiquinol + NAD(+) + 4 H(+)(out). Functionally, core subunit of the mitochondrial membrane respiratory chain NADH dehydrogenase (Complex I) that is believed to belong to the minimal assembly required for catalysis. Complex I functions in the transfer of electrons from NADH to the respiratory chain. The immediate electron acceptor for the enzyme is believed to be ubiquinone. The chain is NADH-ubiquinone oxidoreductase chain 1 (MT-ND1) from Sapajus apella (Brown-capped capuchin).